The primary structure comprises 78 residues: Large ribosomal subunit protein uL29 (78 aa).

It belongs to the universal ribosomal protein uL29 family.

The polypeptide is Large ribosomal subunit protein uL29 (Salinispora arenicola (strain CNS-205)).